The sequence spans 318 residues: MRVILGPMEGVLDHLMREMLTEINDYDFCVTEFVRVVSQPLPDHVFYRLCPELKQGSKTKNGVPVKVQLLGQDPHWMAENAIRAAQLGAHGIDLNFGCPAKMVNQSKGGAALLQHPELIYQVVKACRDAVPSHIPVSAKIRLGWENPEDCFEIVDAVEQGKADELTVHARTKAGGYKASEIKWDYIDQIRQRSTIPLIANGEIWNYADGQACIETTGIDSLMVCRGALNVPNLGNIVKHNHRAMPWHEVVDLLLKYTQYEVRGDKGKYYPNRIKQWFAYLRQAYPQAADLFRDIRTLTQVESIVEHLHHYREQLEVAQ.

FMN contacts are provided by residues 7-9 and glutamine 68; that span reads PME. The Proton donor role is filled by cysteine 98. FMN contacts are provided by residues lysine 139, 200–202, and 224–225; these read NGE and CR.

The protein belongs to the Dus family. DusC subfamily. FMN is required as a cofactor.

The catalysed reaction is 5,6-dihydrouridine(16) in tRNA + NADP(+) = uridine(16) in tRNA + NADPH + H(+). The enzyme catalyses 5,6-dihydrouridine(16) in tRNA + NAD(+) = uridine(16) in tRNA + NADH + H(+). In terms of biological role, catalyzes the synthesis of 5,6-dihydrouridine (D), a modified base found in the D-loop of most tRNAs, via the reduction of the C5-C6 double bond in target uridines. Specifically modifies U16 in tRNAs. In Vibrio vulnificus (strain CMCP6), this protein is tRNA-dihydrouridine(16) synthase.